A 75-amino-acid polypeptide reads, in one-letter code: Defensin-like protein 59 (75 aa).

A signal peptide spans 1-19; it reads MNITKSYVVIFFLVMLTNS. 4 disulfides stabilise this stretch: Cys-39/Cys-73, Cys-43/Cys-66, Cys-52/Cys-71, and Cys-56/Cys-72.

This sequence belongs to the DEFL family.

The protein resides in the secreted. The polypeptide is Defensin-like protein 59 (Arabidopsis thaliana (Mouse-ear cress)).